Here is a 62-residue protein sequence, read N- to C-terminus: uncharacterized protein (62 aa).

2 4Fe-4S ferredoxin-type domains span residues 2–31 (AVTIDYSLCKGAECAECVNNCPMEVFEIEG) and 32–62 (DKVVVARPDDCTYCGVCEDVCPTGAVKVEPE). The [4Fe-4S] cluster site is built by cysteine 10, cysteine 15, cysteine 18, cysteine 22, cysteine 42, cysteine 45, cysteine 48, and cysteine 52.

It depends on [4Fe-4S] cluster as a cofactor.

This is an uncharacterized protein from Methanocaldococcus jannaschii (strain ATCC 43067 / DSM 2661 / JAL-1 / JCM 10045 / NBRC 100440) (Methanococcus jannaschii).